A 382-amino-acid chain; its full sequence is Na(+)/H(+) antiporter NhaA 1 (382 aa).

The next 11 membrane-spanning stretches (helical) occupy residues 10-30 (EFSI…NISP), 45-65 (FSFH…IAAA), 87-107 (LLAT…LNAL), 116-136 (GWGI…SLVF), 145-165 (FLLL…ALFY), 170-190 (LPAA…AALL), 211-231 (AGLF…VPFL), 252-272 (LASF…LFGL), 275-295 (AGVT…SLVI), 326-346 (LVGL…GEAF), and 353-373 (GAAK…LAAG).

This sequence belongs to the NhaA Na(+)/H(+) (TC 2.A.33) antiporter family.

Its subcellular location is the cell inner membrane. It catalyses the reaction Na(+)(in) + 2 H(+)(out) = Na(+)(out) + 2 H(+)(in). Functionally, na(+)/H(+) antiporter that extrudes sodium in exchange for external protons. In Pelobacter propionicus (strain DSM 2379 / NBRC 103807 / OttBd1), this protein is Na(+)/H(+) antiporter NhaA 1.